Reading from the N-terminus, the 589-residue chain is Sphingosine-1-phosphate lyase (589 aa).

Residues 1-58 lie on the Lumenal side of the membrane; the sequence is MSGVSNKTVSINGWYGMPIHLLREEGDFAQFMILTINELKIAIHGYLRNTPWYNMLKD. A glycan (N-linked (GlcNAc...) asparagine) is linked at asparagine 6. Residues 59 to 76 traverse the membrane as a helical segment; sequence YLFVIFCYKLISNFFYLL. The Cytoplasmic segment spans residues 77–589; it reads KVYGPVRLAV…LGPGEDTATK (513 aa). Lysine 380 is subject to N6-(pyridoxal phosphate)lysine.

The protein belongs to the group II decarboxylase family. Sphingosine-1-phosphate lyase subfamily. As to quaternary structure, homodimer. Requires pyridoxal 5'-phosphate as cofactor. In terms of processing, glycosylated.

It is found in the endoplasmic reticulum membrane. The enzyme catalyses sphinganine 1-phosphate = hexadecanal + phosphoethanolamine. It catalyses the reaction (4R)-hydroxysphinganine 1-phosphate = (2R)-hydroxyhexadecanal + phosphoethanolamine. The protein operates within lipid metabolism; sphingolipid metabolism. Its function is as follows. Sphingosine-1-phosphate lyase that cleaves phosphorylated sphingoid bases (PSBs), such as sphingosine-1-phosphate, into fatty aldehydes and phosphoethanolamine. Prefers C-16 dihydrosphingosine-l-phosphate (DHS-P) as a substrate. Regulates intracellular levels of sphingolipid long-chain base phosphates (LCBPs). Plays a role in the regulation of global responses to nutrient deprivation in yeast. In Saccharomyces cerevisiae (strain ATCC 204508 / S288c) (Baker's yeast), this protein is Sphingosine-1-phosphate lyase.